The sequence spans 246 residues: UL16-binding protein 6 (246 aa).

The first 25 residues, 1–25, serve as a signal peptide directing secretion; the sequence is MAAAAIPALLLCLPLLFLLFGWSRA. Residues 29–117 form an MHC class I alpha-1 like region; it reads DPHSLCYDIT…IQLENYTPKE (89 aa). The cysteines at positions 50 and 66 are disulfide-linked. N-linked (GlcNAc...) asparagine glycosylation is found at N68 and N82. Residues 118–210 are MHC class I alpha-2 like; the sequence is PLTLQARMSC…MDSTLEPSAG (93 aa). C127 and C190 are disulfide-bonded. Residue G218 is the site of GPI-anchor amidated glycine attachment. The propeptide at 219–246 is removed in mature form; it reads TTQLRATATTLILCCLLIILPCFILPGI.

The protein belongs to the MHC class I family. As to quaternary structure, interacts with KLRK1/NKG2D. In terms of assembly, (Microbial infection) In CMV-infected cells, interacts with the viral glycoprotein UL16; this interaction causes relocalization from the cell surface to the cytoplasm and prevents binding to and activation of KLRK1/NKG2D, providing CMV with an immune evasion mechanism. In terms of tissue distribution, widely expressed. Expressed in trachea. Constitutively expressed in peripheral blood mononuclear cells, including B-cells and natural killer cells, as well as CD4+ and CD8+ T-cells and monocytes. Tends to be up-regulated in various lymphoid malignancies, including chronic lymphocytic leukemia.

The protein localises to the cell membrane. The protein resides in the endoplasmic reticulum. Binds and activates the KLRK1/NKG2D receptor, mediating natural killer cell cytotoxicity. The chain is UL16-binding protein 6 (RAET1L) from Homo sapiens (Human).